Consider the following 140-residue polypeptide: Large-conductance mechanosensitive channel (140 aa).

A run of 2 helical transmembrane segments spans residues 11–31 (FAMR…GAFG) and 82–102 (GNFI…FLLV).

Belongs to the MscL family. In terms of assembly, homopentamer.

It is found in the cell inner membrane. Channel that opens in response to stretch forces in the membrane lipid bilayer. May participate in the regulation of osmotic pressure changes within the cell. The protein is Large-conductance mechanosensitive channel of Parabacteroides distasonis (strain ATCC 8503 / DSM 20701 / CIP 104284 / JCM 5825 / NCTC 11152).